Reading from the N-terminus, the 396-residue chain is S-adenosylmethionine synthase (396 aa).

His-16 provides a ligand contact to ATP. A Mg(2+)-binding site is contributed by Asp-18. Glu-44 contacts K(+). Positions 57 and 100 each coordinate L-methionine. The interval 100 to 110 (QSVDIAQGVDR) is flexible loop. Residues 165–167 (DAK), Asp-240, 246–247 (RK), Ala-263, and Lys-267 each bind ATP. Asp-240 lines the L-methionine pocket. Position 271 (Lys-271) interacts with L-methionine.

The protein belongs to the AdoMet synthase family. As to quaternary structure, homotetramer; dimer of dimers. It depends on Mg(2+) as a cofactor. Requires K(+) as cofactor.

The protein resides in the cytoplasm. It catalyses the reaction L-methionine + ATP + H2O = S-adenosyl-L-methionine + phosphate + diphosphate. Its pathway is amino-acid biosynthesis; S-adenosyl-L-methionine biosynthesis; S-adenosyl-L-methionine from L-methionine: step 1/1. Its function is as follows. Catalyzes the formation of S-adenosylmethionine (AdoMet) from methionine and ATP. The overall synthetic reaction is composed of two sequential steps, AdoMet formation and the subsequent tripolyphosphate hydrolysis which occurs prior to release of AdoMet from the enzyme. The protein is S-adenosylmethionine synthase of Pseudomonas putida (strain W619).